The sequence spans 365 residues: Peptide chain release factor 1 (365 aa).

Gln-236 is subject to N5-methylglutamine.

It belongs to the prokaryotic/mitochondrial release factor family. In terms of processing, methylated by PrmC. Methylation increases the termination efficiency of RF1.

The protein resides in the cytoplasm. Functionally, peptide chain release factor 1 directs the termination of translation in response to the peptide chain termination codons UAG and UAA. In Latilactobacillus sakei subsp. sakei (strain 23K) (Lactobacillus sakei subsp. sakei), this protein is Peptide chain release factor 1.